The chain runs to 1059 residues: Microtubule-associated protein 1S (1059 aa).

The segment at 1 to 797 (MAAVAGSGAA…SESLPTLSDS (797 aa)) is necessary for the microtubule-organizing center localization. Phosphoserine occurs at positions 321 and 472. Disordered stretches follow at residues 461-733 (PQDL…ASPH) and 751-942 (VPMA…SATP). 2 stretches are compositionally biased toward basic and acidic residues: residues 466–486 (GPGRAESKESVGSRDSSKREG) and 494–530 (PGQERPGVARKEPARAEAPRKTEKEAKTPRELKKDPK). Residues 547 to 557 (SVPNLKKTNAQ) are compositionally biased toward polar residues. Position 582 is a phosphoserine (serine 582). Low complexity predominate over residues 591–603 (ASPPSAACGSPAS). Threonine 638 is modified (phosphothreonine). Serine 640 carries the post-translational modification Phosphoserine. The span at 642 to 652 (ESHRSPAEGSE) shows a compositional bias: basic and acidic residues. Phosphoserine is present on residues serine 655 and serine 657. A necessary for interaction with RASSF1 isoform A and isoform C region spans residues 666 to 1059 (PDASPTVTTP…DAFPACKVEF (394 aa)). The segment covering 670–680 (PTVTTPTVTTP) has biased composition (low complexity). Positions 714 to 966 (EAGLSLPLRG…GSSAHLVDEE (253 aa)) are necessary for association with microtubules. Residues serine 731 and serine 759 each carry the phosphoserine modification. Residues 759–769 (SPGSSNDSSAR) are compositionally biased toward low complexity. The span at 783 to 796 (PPTSVSESLPTLSD) shows a compositional bias: polar residues. The residue at position 809 (serine 809) is a Phosphoserine. A compositionally biased stretch (pro residues) spans 825–836 (PDPLKVPPPLPD). Composition is skewed to low complexity over residues 873 to 887 (AAAPKATPVAAAKTK) and 923 to 936 (TATRGPSGSASSRP). Residues 960 to 1059 (AHLVDEEFFQ…DAFPACKVEF (100 aa)) form a necessary for association with actin region. A necessary for the mitochondrial aggregation and genome destruction region spans residues 967-991 (FFQRVRALCYVISGQDQRKEEGMRA).

This sequence belongs to the MAP1 family. As to quaternary structure, heterodimer of a heavy and a light chain. Interacts with microtubules and actin. Both MAP1S heavy and light chains interact with microtubules. MAP1S light chain interacts with actin. Interacts (via C-terminus) with GAN (via Kelch domains). Interacts with ESR1, LRPPRC, RASSF1 isoform A and isoform C, microtubules and VCY2. Interacts with WDR47 (via N-terminus of light chain). Expressed in neurons (at protein level). Expressed in spermatocytes, spermatids and spermatozoa. Expressed in the cerebral cortex. Highly expressed in testis. Moderately expressed in the brain, colon, heart, kidney, liver, lung, placenta, small intestine, spleen and stomach. Weakly expressed in muscle.

It localises to the nucleus. Its subcellular location is the cytoplasm. The protein localises to the cytosol. It is found in the cytoskeleton. The protein resides in the spindle. Functionally, microtubule-associated protein that mediates aggregation of mitochondria resulting in cell death and genomic destruction (MAGD). Plays a role in anchoring the microtubule organizing center to the centrosomes. Binds to DNA. Plays a role in apoptosis. Involved in the formation of microtubule bundles. This is Microtubule-associated protein 1S (MAP1S) from Homo sapiens (Human).